Consider the following 609-residue polypeptide: Glutamine--fructose-6-phosphate aminotransferase [isomerizing] (609 aa).

Cysteine 2 (nucleophile; for GATase activity) is an active-site residue. The region spanning 2-218 (CGIVGAIAQR…EGDIAEITRR (217 aa)) is the Glutamine amidotransferase type-2 domain. 2 SIS domains span residues 286-426 (ADEL…LKGL) and 458-599 (LAED…VDQP). Lysine 604 serves as the catalytic For Fru-6P isomerization activity.

As to quaternary structure, homodimer.

The protein resides in the cytoplasm. It catalyses the reaction D-fructose 6-phosphate + L-glutamine = D-glucosamine 6-phosphate + L-glutamate. Functionally, catalyzes the first step in hexosamine metabolism, converting fructose-6P into glucosamine-6P using glutamine as a nitrogen source. The chain is Glutamine--fructose-6-phosphate aminotransferase [isomerizing] from Salmonella typhimurium (strain LT2 / SGSC1412 / ATCC 700720).